Here is a 181-residue protein sequence, read N- to C-terminus: Large ribosomal subunit protein uL5 (181 aa).

The protein belongs to the universal ribosomal protein uL5 family. Part of the 50S ribosomal subunit; part of the 5S rRNA/L5/L18/L25 subcomplex. Contacts the 5S rRNA and the P site tRNA. Forms a bridge to the 30S subunit in the 70S ribosome.

Its function is as follows. This is one of the proteins that bind and probably mediate the attachment of the 5S RNA into the large ribosomal subunit, where it forms part of the central protuberance. In the 70S ribosome it contacts protein S13 of the 30S subunit (bridge B1b), connecting the 2 subunits; this bridge is implicated in subunit movement. Contacts the P site tRNA; the 5S rRNA and some of its associated proteins might help stabilize positioning of ribosome-bound tRNAs. The chain is Large ribosomal subunit protein uL5 from Aster yellows witches'-broom phytoplasma (strain AYWB).